The following is an 834-amino-acid chain: Protein EFR3 homolog cmp44E (834 aa).

An HEAT repeat occupies 120 to 156; that stretch reads NLFVESFLRMVQKLLEDSNPNLKIMATNSFVKFANIN. Residues 595-612 traverse the membrane as a helical segment; that stretch reads LHAISIGLLVLISRVSGI.

It belongs to the EFR3 family. In terms of tissue distribution, expression during embryogenesis is ubiquitous with notably higher levels in the CNS and brain.

Its subcellular location is the membrane. Its function is as follows. An essential gene required for embryogenesis; required for cell viability. The chain is Protein EFR3 homolog cmp44E (stmA) from Drosophila melanogaster (Fruit fly).